The chain runs to 940 residues: UvrABC system protein A (940 aa).

31-38 provides a ligand contact to ATP; that stretch reads GLSGSGKS. A C4-type zinc finger spans residues 253-280; it reads CPICGYSMRELEPRLFSFNNPAGACPTC. ABC transporter domains are found at residues 310–587 and 607–937; these read WDRR…PESL and ANPE…RFLK. 640–647 is a binding site for ATP; that stretch reads GVSGSGKS. Residues 740–766 form a C4-type zinc finger; that stretch reads CEACQGDGVIKVEMHFLPDIYVPCDQC.

The protein belongs to the ABC transporter superfamily. UvrA family. As to quaternary structure, forms a heterotetramer with UvrB during the search for lesions.

Its subcellular location is the cytoplasm. The UvrABC repair system catalyzes the recognition and processing of DNA lesions. UvrA is an ATPase and a DNA-binding protein. A damage recognition complex composed of 2 UvrA and 2 UvrB subunits scans DNA for abnormalities. When the presence of a lesion has been verified by UvrB, the UvrA molecules dissociate. The protein is UvrABC system protein A of Escherichia coli O6:H1 (strain CFT073 / ATCC 700928 / UPEC).